The primary structure comprises 211 residues: Large ribosomal subunit protein uL3 (211 aa).

Position 150 is an N5-methylglutamine (glutamine 150).

The protein belongs to the universal ribosomal protein uL3 family. In terms of assembly, part of the 50S ribosomal subunit. Forms a cluster with proteins L14 and L19. In terms of processing, methylated by PrmB.

One of the primary rRNA binding proteins, it binds directly near the 3'-end of the 23S rRNA, where it nucleates assembly of the 50S subunit. The chain is Large ribosomal subunit protein uL3 from Pseudomonas fluorescens (strain Pf0-1).